The primary structure comprises 175 residues: ATP-dependent protease subunit HslV (175 aa).

Residue T2 is part of the active site. Positions 159, 162, and 165 each coordinate Na(+).

It belongs to the peptidase T1B family. HslV subfamily. A double ring-shaped homohexamer of HslV is capped on each side by a ring-shaped HslU homohexamer. The assembly of the HslU/HslV complex is dependent on binding of ATP.

It localises to the cytoplasm. The catalysed reaction is ATP-dependent cleavage of peptide bonds with broad specificity.. Its activity is regulated as follows. Allosterically activated by HslU binding. Functionally, protease subunit of a proteasome-like degradation complex believed to be a general protein degrading machinery. The protein is ATP-dependent protease subunit HslV of Ligilactobacillus salivarius (strain UCC118) (Lactobacillus salivarius).